Here is a 331-residue protein sequence, read N- to C-terminus: 6-phosphogluconolactonase (331 aa).

An N6-acetyllysine modification is found at Lys-287.

Belongs to the cycloisomerase 2 family.

The catalysed reaction is 6-phospho-D-glucono-1,5-lactone + H2O = 6-phospho-D-gluconate + H(+). It participates in carbohydrate degradation; pentose phosphate pathway; D-ribulose 5-phosphate from D-glucose 6-phosphate (oxidative stage): step 2/3. Its function is as follows. Catalyzes the hydrolysis of 6-phosphogluconolactone to 6-phosphogluconate. This is 6-phosphogluconolactonase from Escherichia coli O7:K1 (strain IAI39 / ExPEC).